A 412-amino-acid polypeptide reads, in one-letter code: Peptidase T (412 aa).

A Zn(2+)-binding site is contributed by His-84. Asp-86 is a catalytic residue. Residue Asp-146 participates in Zn(2+) binding. The active-site Proton acceptor is the Glu-179. Positions 180, 202, and 385 each coordinate Zn(2+).

Belongs to the peptidase M20B family. Zn(2+) serves as cofactor.

It is found in the cytoplasm. The enzyme catalyses Release of the N-terminal residue from a tripeptide.. In terms of biological role, cleaves the N-terminal amino acid of tripeptides. The protein is Peptidase T of Haemophilus influenzae (strain PittEE).